The chain runs to 207 residues: Alpha-1-acid glycoprotein 1 (207 aa).

The first 18 residues, M1–A18, serve as a signal peptide directing secretion. Position 19 is a pyrrolidone carboxylic acid (Q19). N-linked (GlcNAc...) asparagine glycosylation is found at N25, N34, N76, N94, and N104. A disulfide bridge links C91 with C184.

The protein belongs to the calycin superfamily. Lipocalin family.

It is found in the secreted. Functions as a transport protein in the blood stream. Binds various ligands in the interior of its beta-barrel domain. Appears to function in modulating the activity of the immune system during the acute-phase reaction. The protein is Alpha-1-acid glycoprotein 1 (Orm1) of Mus musculus (Mouse).